The chain runs to 171 residues: 3-hydroxydecanoyl-[acyl-carrier-protein] dehydratase (171 aa).

Residue His70 is part of the active site.

It belongs to the thioester dehydratase family. FabA subfamily. In terms of assembly, homodimer.

It localises to the cytoplasm. It carries out the reaction a (3R)-hydroxyacyl-[ACP] = a (2E)-enoyl-[ACP] + H2O. The enzyme catalyses (3R)-hydroxydecanoyl-[ACP] = (2E)-decenoyl-[ACP] + H2O. It catalyses the reaction (2E)-decenoyl-[ACP] = (3Z)-decenoyl-[ACP]. Its pathway is lipid metabolism; fatty acid biosynthesis. Its function is as follows. Necessary for the introduction of cis unsaturation into fatty acids. Catalyzes the dehydration of (3R)-3-hydroxydecanoyl-ACP to E-(2)-decenoyl-ACP and then its isomerization to Z-(3)-decenoyl-ACP. Can catalyze the dehydratase reaction for beta-hydroxyacyl-ACPs with saturated chain lengths up to 16:0, being most active on intermediate chain length. The protein is 3-hydroxydecanoyl-[acyl-carrier-protein] dehydratase of Xanthomonas axonopodis pv. citri (strain 306).